Here is a 459-residue protein sequence, read N- to C-terminus: GTPase Der (459 aa).

2 EngA-type G domains span residues 4-169 and 179-355; these read PLVA…PEVT and IAVS…AAHR. Residues 10–17, 57–61, 120–123, 185–192, 232–236, and 297–300 contribute to the GTP site; these read GRPNVGKS, DTGGL, NKCE, DTAGI, and NKWD. Positions 356–441 constitute a KH-like domain; the sequence is KRVPTAVVNE…PIRFLWRGKS (86 aa).

Belongs to the TRAFAC class TrmE-Era-EngA-EngB-Septin-like GTPase superfamily. EngA (Der) GTPase family. In terms of assembly, associates with the 50S ribosomal subunit.

GTPase that plays an essential role in the late steps of ribosome biogenesis. The sequence is that of GTPase Der from Synechococcus sp. (strain JA-2-3B'a(2-13)) (Cyanobacteria bacterium Yellowstone B-Prime).